The chain runs to 332 residues: Lipoyl synthase (332 aa).

The [4Fe-4S] cluster site is built by Cys-74, Cys-79, Cys-85, Cys-100, Cys-104, Cys-107, and Ser-314. Residues 85–303 form the Radical SAM core domain; the sequence is CFGKGTATFM…EEEAYKMGFT (219 aa).

Belongs to the radical SAM superfamily. Lipoyl synthase family. It depends on [4Fe-4S] cluster as a cofactor.

It is found in the cytoplasm. It carries out the reaction [[Fe-S] cluster scaffold protein carrying a second [4Fe-4S](2+) cluster] + N(6)-octanoyl-L-lysyl-[protein] + 2 oxidized [2Fe-2S]-[ferredoxin] + 2 S-adenosyl-L-methionine + 4 H(+) = [[Fe-S] cluster scaffold protein] + N(6)-[(R)-dihydrolipoyl]-L-lysyl-[protein] + 4 Fe(3+) + 2 hydrogen sulfide + 2 5'-deoxyadenosine + 2 L-methionine + 2 reduced [2Fe-2S]-[ferredoxin]. Its pathway is protein modification; protein lipoylation via endogenous pathway; protein N(6)-(lipoyl)lysine from octanoyl-[acyl-carrier-protein]: step 2/2. In terms of biological role, catalyzes the radical-mediated insertion of two sulfur atoms into the C-6 and C-8 positions of the octanoyl moiety bound to the lipoyl domains of lipoate-dependent enzymes, thereby converting the octanoylated domains into lipoylated derivatives. The protein is Lipoyl synthase of Paracidovorax citrulli (strain AAC00-1) (Acidovorax citrulli).